The primary structure comprises 297 residues: Protoheme IX farnesyltransferase (297 aa).

9 helical membrane-spanning segments follow: residues 12-32 (PGII…AAKG), 36-56 (YALF…GCVF), 85-105 (VSLV…YLAA), 108-128 (LAMW…SLYM), 133-153 (VYGT…GYCA), 163-183 (LILL…IAIF), 209-229 (ITLY…SGYA), 230-250 (GYKY…MALQ), and 266-286 (FIFS…DFMV).

Belongs to the UbiA prenyltransferase family. Protoheme IX farnesyltransferase subfamily.

The protein resides in the cell inner membrane. It carries out the reaction heme b + (2E,6E)-farnesyl diphosphate + H2O = Fe(II)-heme o + diphosphate. The protein operates within porphyrin-containing compound metabolism; heme O biosynthesis; heme O from protoheme: step 1/1. Its function is as follows. Converts heme B (protoheme IX) to heme O by substitution of the vinyl group on carbon 2 of heme B porphyrin ring with a hydroxyethyl farnesyl side group. In Sodalis glossinidius (strain morsitans), this protein is Protoheme IX farnesyltransferase.